The chain runs to 286 residues: MIDQLKIIGQYLLPKKLLSRLLGKLAAAEAGKLTTFLIKKFINKFNVDMSEAKYSDPEYFKTFNDFFTRELKPEARQIIAGEDNLAHPVDGAVSQMGDIKEGRLFQAKGHDFSLRELLGGRDDVAAPFDKGLFSTIYLAPKDYHRIHMPITGKLEQMIFIPGDLFSVNPLTAQNVPNLFARNERAVAIFSTAVGPVAMVLVGATIVASIETVWAGTLTANADKEIQYWDYKNQDITLEKGAEMGRFKLGSTVVALFPKESIHFAENLQAGSVTRLGELFASKVEHK.

Catalysis depends on charge relay system; for autoendoproteolytic cleavage activity residues Asp90, His147, and Ser250. Ser250 (schiff-base intermediate with substrate; via pyruvic acid; for decarboxylase activity) is an active-site residue. Ser250 carries the post-translational modification Pyruvic acid (Ser); by autocatalysis.

Belongs to the phosphatidylserine decarboxylase family. PSD-B subfamily. Prokaryotic type I sub-subfamily. As to quaternary structure, heterodimer of a large membrane-associated beta subunit and a small pyruvoyl-containing alpha subunit. Pyruvate is required as a cofactor. Post-translationally, is synthesized initially as an inactive proenzyme. Formation of the active enzyme involves a self-maturation process in which the active site pyruvoyl group is generated from an internal serine residue via an autocatalytic post-translational modification. Two non-identical subunits are generated from the proenzyme in this reaction, and the pyruvate is formed at the N-terminus of the alpha chain, which is derived from the carboxyl end of the proenzyme. The autoendoproteolytic cleavage occurs by a canonical serine protease mechanism, in which the side chain hydroxyl group of the serine supplies its oxygen atom to form the C-terminus of the beta chain, while the remainder of the serine residue undergoes an oxidative deamination to produce ammonia and the pyruvoyl prosthetic group on the alpha chain. During this reaction, the Ser that is part of the protease active site of the proenzyme becomes the pyruvoyl prosthetic group, which constitutes an essential element of the active site of the mature decarboxylase.

The protein resides in the cell membrane. The enzyme catalyses a 1,2-diacyl-sn-glycero-3-phospho-L-serine + H(+) = a 1,2-diacyl-sn-glycero-3-phosphoethanolamine + CO2. The protein operates within phospholipid metabolism; phosphatidylethanolamine biosynthesis; phosphatidylethanolamine from CDP-diacylglycerol: step 2/2. Its function is as follows. Catalyzes the formation of phosphatidylethanolamine (PtdEtn) from phosphatidylserine (PtdSer). This is Phosphatidylserine decarboxylase proenzyme from Psychromonas ingrahamii (strain DSM 17664 / CCUG 51855 / 37).